The chain runs to 283 residues: Aldo-keto reductase MSMEG_2407/MSMEI_2346 (283 aa).

Y58 acts as the Proton donor in catalysis. Residues G196, L198, V200, I236, R238, S239, A240, R244, S247, N248, and R274 each coordinate NADPH.

Belongs to the aldo/keto reductase family. Monomer.

Inhibited by the antituberculosis drug isoniazid (INH). In terms of biological role, catalyzes the NADPH-dependent reduction of dicarbonyls. Exhibits narrow substrate specificity, with preferential activity against the dicarbonyl substrates phenylglyoxal and methylglyoxal. Exhibits weak activity with ethyl-2-methyl acetoacetate. Cannot use NADH. May play an important role in the detoxification of methylglyoxal. This is Aldo-keto reductase MSMEG_2407/MSMEI_2346 from Mycolicibacterium smegmatis (strain ATCC 700084 / mc(2)155) (Mycobacterium smegmatis).